The primary structure comprises 304 residues: Plasmodesmata-located protein 3 (304 aa).

The N-terminal stretch at 1-26 is a signal peptide; sequence MGFYSLKQLLLLYIIIMALFSDLKLA. Residues 27–272 lie on the Extracellular side of the membrane; that stretch reads KSSSPEYTNL…SSSSGTTGKT (246 aa). Gnk2-homologous domains follow at residues 34–138 and 143–242; these read TNLI…ISGF and GMEL…FYPN. Disulfide bonds link cysteine 41–cysteine 116, cysteine 92–cysteine 101, cysteine 104–cysteine 129, cysteine 151–cysteine 220, cysteine 196–cysteine 205, and cysteine 208–cysteine 233. A helical transmembrane segment spans residues 273–293; it reads VAIIVGGTAGVGFLVICLLFV. The interval 273-293 is necessary and sufficient for plasmodesmal targeting; sequence VAIIVGGTAGVGFLVICLLFV. Topologically, residues 294-304 are cytoplasmic; the sequence is KNLMKKKYDDY.

Belongs to the cysteine-rich repeat secretory protein family. Plasmodesmata-located proteins (PDLD) subfamily. As to quaternary structure, (Microbial infection) Interacts with Grapevine fanleaf virus (GFLV) 2B-MP. As to expression, highly expressed in inflorescence pedacel and shoot apex. Expressed in the outermost L1 layer of the shoot apical meristem and in the epidermis of bulging floral primordia. Within the L1, expression was restricted to the peripheral zone (at protein level).

The protein localises to the cell membrane. It is found in the cell junction. Its subcellular location is the plasmodesma. Its function is as follows. Modulates cell-to-cell trafficking. This is Plasmodesmata-located protein 3 from Arabidopsis thaliana (Mouse-ear cress).